Here is a 99-residue protein sequence, read N- to C-terminus: MSNQIIRDHKRRLLVAKYELKRMHYKAICQDRNLPNKIRYEYFFKLSKLPRNSSKTRVRNRCIFTGRPRSVYKLFRISRIVFRELASKGSLIGINKSCW.

Belongs to the universal ribosomal protein uS14 family.

It is found in the mitochondrion. In Marchantia polymorpha (Common liverwort), this protein is Small ribosomal subunit protein uS14m (RPS14).